We begin with the raw amino-acid sequence, 273 residues long: MAHPIPVVVNGATGKMGRETIKAIAAADDVTLVGAIARSADVQGQDIGEIVGLGPLEVPVTNDLEGMLCLASQEREVPVVVDFTHPDCIYDNVRKAIAYGVRPVVGTTGLNNEQLQELAEFAEKASVGCLVIPNFSIGMVLLMQAAIQASRFYDHVEILELHHDQKADAPSGTAIKTAQMLAELGKTFNPPKVTEKETMPGARGAVGPENIRIHSVRLPGLIAHEEVIFGAPGEILTLRHDTMDRSCYMPGVLLAVRKVRQLTGLIYGLDRIL.

NAD(+)-binding positions include 11-16 and 106-108; these read GATGKM and GTT. Catalysis depends on His-162, which acts as the Proton donor/acceptor. Position 163 (His-163) interacts with (S)-2,3,4,5-tetrahydrodipicolinate. Residue Lys-166 is the Proton donor of the active site. 172-173 is a binding site for (S)-2,3,4,5-tetrahydrodipicolinate; it reads GT.

This sequence belongs to the DapB family.

The protein localises to the cytoplasm. It carries out the reaction (S)-2,3,4,5-tetrahydrodipicolinate + NAD(+) + H2O = (2S,4S)-4-hydroxy-2,3,4,5-tetrahydrodipicolinate + NADH + H(+). It catalyses the reaction (S)-2,3,4,5-tetrahydrodipicolinate + NADP(+) + H2O = (2S,4S)-4-hydroxy-2,3,4,5-tetrahydrodipicolinate + NADPH + H(+). The protein operates within amino-acid biosynthesis; L-lysine biosynthesis via DAP pathway; (S)-tetrahydrodipicolinate from L-aspartate: step 4/4. In terms of biological role, catalyzes the conversion of 4-hydroxy-tetrahydrodipicolinate (HTPA) to tetrahydrodipicolinate. In Synechococcus elongatus (strain ATCC 33912 / PCC 7942 / FACHB-805) (Anacystis nidulans R2), this protein is 4-hydroxy-tetrahydrodipicolinate reductase.